The chain runs to 1336 residues: Immunoglobulin superfamily member 1 (1336 aa).

The signal sequence occupies residues 1 to 28 (MTLDRPGEGATMLKTFTVLLFCIRMSLG). Over 29–518 (MTSIVMDPQP…GYLTWNYVLN (490 aa)) the chain is Extracellular. Ig-like C2-type domains are found at residues 38 to 122 (PELW…KVLE), 137 to 222 (QAET…LVVA), 226 to 312 (PKPT…SDVL), 321 to 408 (PKTW…PSHN), and 419 to 500 (PKPS…HRSE). Residue N53 is glycosylated (N-linked (GlcNAc...) asparagine). C58 and C106 are joined by a disulfide. C248 and C296 form a disulfide bridge. N338, N374, and N381 each carry an N-linked (GlcNAc...) asparagine glycan. Intrachain disulfides connect C343–C392 and C441–C484. A helical transmembrane segment spans residues 519–539 (EAIRLSLIMQLVALLLVVLWI). The Cytoplasmic segment spans residues 540–559 (RWKCRRLRIREAWLLGTAQG). A helical membrane pass occupies residues 560 to 580 (VTMLFIVTALLCCGLCNGVLI). Residues 581–1336 (EETEIVMPTP…RISVELPVPI (756 aa)) are Extracellular-facing. 7 Ig-like C2-type domains span residues 589–677 (TPKP…ALEL), 686–760 (PVIS…RPFK), 777–869 (PKPF…LVVT), 873–958 (PKPT…YLSM), 965–1060 (TDTF…ELLV), 1065–1150 (PKPS…NHSD), and 1161–1242 (PKPS…EPSD). N-linked (GlcNAc...) asparagine glycosylation is found at N607, N747, N798, N846, N939, N986, N1027, and N1082. C703 and C750 form a disulfide bridge. 2 cysteine pairs are disulfide-bonded: C799–C849 and C895–C942. A disulfide bond links C1087 and C1134. Residues N1147 and N1223 are each glycosylated (N-linked (GlcNAc...) asparagine). Cysteines 1183 and 1226 form a disulfide. A disordered region spans residues 1308 to 1336 (CNQEGEPGTPANSPSSTSQRISVELPVPI). Positions 1317-1328 (PANSPSSTSQRI) are enriched in polar residues.

As to quaternary structure, interacts with INHA. In PubMed:12385827 does not interact with INHA; standard receptor binding assay. Interacts with ACVR1B; the interaction appears to be ligand-dependent as it is diminished by inhibin B and activin A. Interacts with ACVR2A, ACVR2B, ACVRL1 and BMPR1B. Interacts with HECTD1. In terms of tissue distribution, highly expressed in pancreas, testis and fetal liver. Moderately expressed in heart, prostate and small intestine. Expressed at very low levels in brain, thymus, ovary, colon, fetal lung and fetal kidney. Expressed in muscle. Isoform 3 is expressed in pituitary gland.

It localises to the membrane. Its subcellular location is the secreted. Functionally, seems to be a coreceptor in inhibin signaling, but seems not to be a high-affinity inhibin receptor. Antagonizes activin A signaling in the presence or absence of inhibin B. Necessary to mediate a specific antagonistic effect of inhibin B on activin-stimulated transcription. This chain is Immunoglobulin superfamily member 1 (IGSF1), found in Homo sapiens (Human).